The chain runs to 69 residues: Magnetosome protein MamI (69 aa).

The Cytoplasmic segment spans residues 1-2 (MP). The chain crosses the membrane as a helical span at residues 3–23 (SVIFGLLALAIGLLGLTAWWW). The Lumenal portion of the chain corresponds to 24–31 (SVTEFLRG). Residues 32-52 (AVPVALIIFGLVALAAGVQSV) traverse the membrane as a helical segment. Over 53–69 (RVPPAGKRANSDPNIDG) the chain is Cytoplasmic.

The protein belongs to the magnetosome MamI protein family.

It localises to the magnetosome membrane. Its function is as follows. May be involved in an early stage of magnetosome nucleation. Not essential for formation of magnetosome membrane vesicles, it is probably functionally redundant with other proteins. May bind magnetite. One of 7 genes (mamLQBIEMO) able to induce magnetosome membrane biogenesis; coexpression of mamLQRBIEMO in a deletion of the 17 gene mamAB operon restores magnetosome vesicle formation but not magnetite biosynthesis. This Magnetospirillum gryphiswaldense (strain DSM 6361 / JCM 21280 / NBRC 15271 / MSR-1) protein is Magnetosome protein MamI.